The following is a 219-amino-acid chain: Small ribosomal subunit protein uS3 (219 aa).

Positions 38-106 (IREYINVRLK…RVHINILEVK (69 aa)) constitute a KH type-2 domain.

It belongs to the universal ribosomal protein uS3 family. Part of the 30S ribosomal subunit. Forms a tight complex with proteins S10 and S14.

Binds the lower part of the 30S subunit head. Binds mRNA in the 70S ribosome, positioning it for translation. The chain is Small ribosomal subunit protein uS3 from Bacillus thuringiensis (strain Al Hakam).